The following is a 570-amino-acid chain: Ferroportin (570 aa).

At 1 to 23 (MTKARDQTHQEGCCGSLANYLTS) the chain is on the cytoplasmic side. A helical membrane pass occupies residues 24 to 53 (AKFLLYLGHSLSTWGDRMWHFAVSVFLVEL). Fe cation contacts are provided by Asp39 and His43. Over 54 to 57 (YGNS) the chain is Extracellular. The helical transmembrane segment at 58–84 (LLLTAVYGLVVAGSVLVLGAIIGDWVD) threads the bilayer. The Cytoplasmic segment spans residues 85 to 87 (KNA). Residues 88 to 118 (RLKVAQTSLVVQNVSVILCGIILMMVFLHKN) form a helical membrane-spanning segment. The Extracellular segment spans residues 119-126 (ELLTMYHG). A helical membrane pass occupies residues 127–162 (WVLTVCYILIITIANIANLASTATAITIQRDWIVVV). At 163–164 (AG) the chain is on the cytoplasmic side. Residues 165 to 195 (ENRSRLADMNATIRRIDQLTNILAPMAVGQI) traverse the membrane as a helical segment. Residues 196-202 (MTFGSPV) are Extracellular-facing. Residues 203–229 (IGCGFISGWNLVSMCVEYFLLWKVYQK) form a helical membrane-spanning segment. The Cytoplasmic segment spans residues 230-306 (TPALAVKAAL…DGWVSYYNQP (77 aa)). Residues 307-333 (VFLAGMGLAFLYMTVLGFDCITTGYAY) form a helical membrane-spanning segment. Cys326 contributes to the Fe cation binding site. Residues 334 to 338 (TQGLS) lie on the Extracellular side of the membrane. Residues 339-366 (GSILSILMGASAITGIMGTVAFTWLRRK) form a helical membrane-spanning segment. The Cytoplasmic segment spans residues 367–368 (CG). A helical transmembrane segment spans residues 369–391 (LVRTGLFSGLAQLSCLILCVISV). Topologically, residues 392-452 (FMPGSPLDLS…EMSTKPIPIV (61 aa)) are extracellular. An N-linked (GlcNAc...) asparagine glycan is attached at Asn437. A helical membrane pass occupies residues 453 to 482 (SVSLLFAGVIAARIGLWSFDLTVTQLLQEN). The Cytoplasmic portion of the chain corresponds to 483 to 487 (VIESE). A helical membrane pass occupies residues 488–512 (RGIINGVQNSMNYLLDLLHFIMVIL). His506 is a Fe cation binding site. Topologically, residues 513–515 (APN) are extracellular. A helical membrane pass occupies residues 516–541 (PEAFGLLVLISVSFVAMGHLMYFRFA). The Cytoplasmic portion of the chain corresponds to 542 to 570 (QKTLGNQIFVCGPDEKEVTDENQPNTSVV).

The protein belongs to the ferroportin (FP) (TC 2.A.100) family. SLC40A subfamily. In terms of assembly, identified in a complex with STOM. Interacts with HAMP; affinity of the peptide hormone HAMP for SLC40A1 increases by 80-fold in the presence of iron and the interaction promotes SLC40A1 ubiquitination and degradation. Part of a complex composed of SLC40A1/ferroportin, TF/transferrin and HEPH/hephaestin that transfers iron from cells to transferrin. In terms of processing, polyubiquitinated by RNF217; leading to proteasomal degradation. Under conditions of high systemic iron levels, both the hormone peptide hepcidin/HAMP and holo(iron bound)-transferrin/TF induce the ubiquitination, internalization and proteasomal degradation of SLC40A1 to control iron release from cells. High expression in spleen, liver, kidney, heart and duodenum.

The protein resides in the cell membrane. Its subcellular location is the basolateral cell membrane. It catalyses the reaction Fe(2+)(in) = Fe(2+)(out). Transports Fe(2+) from the inside of a cell to the outside of the cell, playing a key role for maintaining systemic iron homeostasis. Transports iron from intestinal, splenic, hepatic cells, macrophages and erythrocytes into the blood to provide iron to other tissues. Controls therefore dietary iron uptake, iron recycling by macrophages and erythrocytes, and release of iron stores in hepatocytes. When iron is in excess in serum, circulating HAMP/hepcidin levels increase resulting in a degradation of SLC40A1, thus limiting the iron efflux to plasma. In Mus musculus (Mouse), this protein is Ferroportin.